A 223-amino-acid chain; its full sequence is Deoxyribose-phosphate aldolase (223 aa).

Residue Asp-92 is the Proton donor/acceptor of the active site. Residue Lys-153 is the Schiff-base intermediate with acetaldehyde of the active site. Lys-182 serves as the catalytic Proton donor/acceptor.

Belongs to the DeoC/FbaB aldolase family. DeoC type 1 subfamily.

It is found in the cytoplasm. It catalyses the reaction 2-deoxy-D-ribose 5-phosphate = D-glyceraldehyde 3-phosphate + acetaldehyde. It functions in the pathway carbohydrate degradation; 2-deoxy-D-ribose 1-phosphate degradation; D-glyceraldehyde 3-phosphate and acetaldehyde from 2-deoxy-alpha-D-ribose 1-phosphate: step 2/2. Its function is as follows. Catalyzes a reversible aldol reaction between acetaldehyde and D-glyceraldehyde 3-phosphate to generate 2-deoxy-D-ribose 5-phosphate. The sequence is that of Deoxyribose-phosphate aldolase from Mycoplasmoides gallisepticum (strain R(low / passage 15 / clone 2)) (Mycoplasma gallisepticum).